The following is a 224-amino-acid chain: Methylamine utilization ferredoxin-type protein MauM (224 aa).

An N-terminal signal peptide occupies residues 1-41 (MEARMTGRRKVTRRDAMADAARAVGVACLGGFSLAALVRTA). 4Fe-4S ferredoxin-type domains lie at 54 to 84 (ALPE…LAEW), 91 to 124 (GTPF…RDIP), 133 to 169 (VAVL…LEPQ), and 177 to 208 (MIPV…VLPR). Residues C64, C67, C70, C74, C102, C105, C110, C114, C142, C150, C153, C157, C186, C189, C192, and C196 each contribute to the [4Fe-4S] cluster site.

It participates in one-carbon metabolism; methylamine degradation. Involved in electron transfer. The sequence is that of Methylamine utilization ferredoxin-type protein MauM (mauM) from Paracoccus denitrificans (strain Pd 1222).